Here is a 448-residue protein sequence, read N- to C-terminus: Iroquois-class homeodomain protein irx-3 (448 aa).

A DNA-binding region (homeobox; TALE-type) is located at residues 108 to 170 (DPSRPKNATR…NARRRLKKEN (63 aa)). 2 disordered regions span residues 171–250 (KMTW…NAPE) and 387–410 (SGTA…DRSS). A compositionally biased stretch (acidic residues) spans 195-222 (KHEDDEEIDLENIDTEDIESKEDLDDPD). Residues 223–237 (TDIHSDSKTDARSDS) show a composition bias toward basic and acidic residues. Residues 238–248 (EASDGFEDLNA) are compositionally biased toward acidic residues. A compositionally biased stretch (basic and acidic residues) spans 396–406 (AEPKHSTDSLT).

Belongs to the TALE/IRO homeobox family. As to expression, expressed in the neural plate in overlapping patterns with other irx members, which all share an anterior border of expression. Outside the nervous system and at tailbud stages, expressed in the developing otic vesicle, branchial arches, prospective heart region and pronephros.

The protein resides in the nucleus. Its function is as follows. Acts partially redundantly with other irx members in neural patterning. Required for formation of the posterior forebrain, midbrain, hindbrain, and to a lesser extent, spinal cord. Both up-regulates and down-regulates gene expression during neural development. Acts early in neural plate development to induce proneural gene expression and specify a neural precursor state. Also up-regulates repressors that prevent neuronal differentiation. Required during at least two stages of pronephros kidney development; during neurula stages, maintains transcription of key renal genes to define the size and identity of the pronephric anlage, probably in part through regulation of bmp-signaling. Subsequently required for proper formation of the intermediate tubule segment of the pronephros. The chain is Iroquois-class homeodomain protein irx-3 from Xenopus tropicalis (Western clawed frog).